Reading from the N-terminus, the 99-residue chain is uncharacterized protein (99 aa).

The stretch at 3–68 forms a coiled coil; the sequence is ERLKAITNLL…EKFDSNRKFY (66 aa).

This is an uncharacterized protein from Aquifex aeolicus (strain VF5).